The primary structure comprises 190 residues: Glutathione peroxidase 2 (190 aa).

Sec-40 is an active-site residue. A non-standard amino acid (selenocysteine) is located at residue Sec-40.

Belongs to the glutathione peroxidase family. As to quaternary structure, homotetramer. As to expression, mucosal epithelium of the gastrointestinal tract.

It is found in the cytoplasm. It localises to the cytosol. It carries out the reaction 2 glutathione + H2O2 = glutathione disulfide + 2 H2O. The enzyme catalyses a hydroperoxy polyunsaturated fatty acid + 2 glutathione = a hydroxy polyunsaturated fatty acid + glutathione disulfide + H2O. The catalysed reaction is tert-butyl hydroperoxide + 2 glutathione = tert-butanol + glutathione disulfide + H2O. It catalyses the reaction cumene hydroperoxide + 2 glutathione = 2-phenylpropan-2-ol + glutathione disulfide + H2O. It carries out the reaction (13S)-hydroperoxy-(9Z,11E)-octadecadienoate + 2 glutathione = (13S)-hydroxy-(9Z,11E)-octadecadienoate + glutathione disulfide + H2O. The enzyme catalyses (5S)-hydroperoxy-(6E,8Z,11Z,14Z)-eicosatetraenoate + 2 glutathione = (5S)-hydroxy-(6E,8Z,11Z,14Z)-eicosatetraenoate + glutathione disulfide + H2O. The catalysed reaction is (12R)-hydroperoxy-(5Z,8Z,10E,14Z)-eicosatetraenoate + 2 glutathione = (12R)-hydroxy-(5Z,8Z,10E,14Z)-eicosatetraenoate + glutathione disulfide + H2O. It catalyses the reaction (15S)-hydroperoxy-(5Z,8Z,11Z,13E)-eicosatetraenoate + 2 glutathione = (15S)-hydroxy-(5Z,8Z,11Z,13E)-eicosatetraenoate + glutathione disulfide + H2O. Catalyzes the reduction of hydroperoxides in a glutathione-dependent manner thus regulating cellular redox homeostasis. Can reduce small soluble hydroperoxide such as H2O2. Can reduce cumene hydroperoxide and tert-butyl hydroperoxide, as well as several fatty acid-derived hydroperoxides. Cannot reduce phosphatidycholine hydroperoxide. The chain is Glutathione peroxidase 2 (Gpx2) from Rattus norvegicus (Rat).